Here is a 327-residue protein sequence, read N- to C-terminus: MSFVAHPNIDPRSLGKVGVLLGGRSAEREISLMSGNGVLAALQSRGVDAHGFDPGLQGVAELAAAGFDRVFIALHGRYGEDGTIQGLLEQLGVPYTGSGVLASALAMDKQATKRLWMTHGLATPRFAMLHADTDFDAVVADLGLPLIVKPAREGSSIGLTKVTAADQMRAAFDKAAALDNDVIAETFVDGAELTCPVVGEGDTAEALPVIRIVAPEANYDYQNKYFTDDTQYLCPSGLDAEVERQVQALAVQAYRVLGCRGWARADVMLRADGTPFLLEMNTSPGMTGHSLVPMAARAVGISYEDFVLQVLAAATLDLHPNEHWKPE.

The region spanning 113–312 (KRLWMTHGLA…YEDFVLQVLA (200 aa)) is the ATP-grasp domain. An ATP-binding site is contributed by 139 to 194 (VADLGLPLIVKPAREGSSIGLTKVTAADQMRAAFDKAAALDNDVIAETFVDGAELT). Mg(2+) is bound by residues aspartate 266, glutamate 279, and asparagine 281.

It belongs to the D-alanine--D-alanine ligase family. Mg(2+) serves as cofactor. Requires Mn(2+) as cofactor.

The protein resides in the cytoplasm. The catalysed reaction is 2 D-alanine + ATP = D-alanyl-D-alanine + ADP + phosphate + H(+). The protein operates within cell wall biogenesis; peptidoglycan biosynthesis. Functionally, cell wall formation. The chain is D-alanine--D-alanine ligase from Cupriavidus taiwanensis (strain DSM 17343 / BCRC 17206 / CCUG 44338 / CIP 107171 / LMG 19424 / R1) (Ralstonia taiwanensis (strain LMG 19424)).